The sequence spans 517 residues: MVENQGNVEAHGKPKKVILSLSLKESSKINDSQNVSNVSSKEKCETEALLREENKENLSSDSIRQMIFGDEMAGFVDTGEKPPCSYATLIGLAILQSHNKQLTLSGIYTWIRNTFRYYLNHDGGWQNSIRHNLSLNKAFIKVEKPKGKTLKGHYWTIDPDHMQNFVSVRLHRSHSTDSNSKKRPSSKCHEIKPLTTREIPLARKRSRLNSFNSSTSTSGSSSNVAAEVSNDASQPSNQDSSLNSNIVKPPLPPSNVQSNSSSSENVPKPNAETQEDLPTIDAHESSLYENVNDSRLYEVPACRNMALNTGYSDADPGYLRTSFRSNSHNSLPYSANEEEDVLQADFLVSQQSSMVSSYVSSRDPHSMPYYRREPIPLRPSSRFYEYTRPTYGRTDTSCSAPGAFCSTQINSPSSYINYSKCAPSSPTLSLQKHREHVKSLLYVPDLTPSFDGSDPWNPSSQLLSEPLFDQHSFQSSLDDLMSVTCFRDSPELNHESSGYSSAPLMPSNRAFINDFSL.

A DNA-binding region (fork-head) is located at residues 81-172 (KPPCSYATLI…QNFVSVRLHR (92 aa)). Positions 170–278 (LHRSHSTDSN…PNAETQEDLP (109 aa)) are disordered. Over residues 209 to 223 (NSFNSSTSTSGSSSN) the composition is skewed to low complexity. The segment covering 230–246 (NDASQPSNQDSSLNSNI) has biased composition (polar residues). Residues 254–270 (SNVQSNSSSSENVPKPN) show a composition bias toward low complexity.

The protein localises to the nucleus. Functionally, functions as a meiosis-specific transcription factor. Binds to the 5'-GTAAAYA-3' consensus sequence of the promoter of the spo6 gene. This Schizosaccharomyces pombe (strain 972 / ATCC 24843) (Fission yeast) protein is Meiosis-specific transcription factor mei4 (mei4).